The primary structure comprises 1023 residues: 2-oxoglutarate dehydrogenase complex component E1 (1023 aa).

The N-terminal 40 residues, 1-40 (MFHLRTCAAKLRPLTASQTVKTFSQNRPAAARTFQQIRCY), are a transit peptide targeting the mitochondrion. Lys-74 bears the N6-succinyllysine mark. Ser-100 is modified (phosphoserine). The Ca(2+) site is built by His-143, Asp-156, and Asp-158. Arg-312 contacts thiamine diphosphate. N6-acetyllysine is present on Lys-401. Thiamine diphosphate-binding residues include Asp-411, Asn-444, and Ile-446. Residues Asp-411, Asn-444, and Ile-446 each coordinate Mg(2+). A Glycyl lysine isopeptide (Lys-Gly) (interchain with G-Cter in ubiquitin) cross-link involves residue Lys-534. An N6-succinyllysine modification is found at Lys-564. Gln-676 contributes to the thiamine diphosphate binding site. At Lys-970 the chain carries N6-acetyllysine.

Belongs to the alpha-ketoglutarate dehydrogenase family. In terms of assembly, homodimer. The 2-oxoglutarate dehydrogenase complex is composed of OGDH (2-oxoglutarate dehydrogenase; E1), DLST (dihydrolipoamide succinyltransferase; E2), DLD (dihydrolipoamide dehydrogenase; E3) and the assembly factor KGD4. It contains multiple copies of the three enzymatic components (E1, E2 and E3). In the nucleus, the 2-oxoglutarate dehydrogenase complex associates with KAT2A. Interacts with ABHD11; this interaction maintains the functional lipoylation of the 2-oxoglutarate dehydrogenase complex. Requires thiamine diphosphate as cofactor. The cofactor is Mg(2+).

Its subcellular location is the mitochondrion. The protein localises to the nucleus. The enzyme catalyses N(6)-[(R)-lipoyl]-L-lysyl-[protein] + 2-oxoglutarate + H(+) = N(6)-[(R)-S(8)-succinyldihydrolipoyl]-L-lysyl-[protein] + CO2. Its activity is regulated as follows. Calcium ions and ADP stimulate, whereas ATP and NADH reduce catalytic activity. Its function is as follows. 2-oxoglutarate dehydrogenase (E1o) component of the 2-oxoglutarate dehydrogenase complex (OGDHC). Participates in the first step, rate limiting for the overall conversion of 2-oxoglutarate to succinyl-CoA and CO(2) catalyzed by the whole OGDHC. Catalyzes the irreversible decarboxylation of 2-oxoglutarate (alpha-ketoglutarate) via the thiamine diphosphate (ThDP) cofactor and subsequent transfer of the decarboxylated acyl intermediate on an oxidized dihydrolipoyl group that is covalently amidated to the E2 enzyme (dihydrolipoyllysine-residue succinyltransferase or DLST). Plays a key role in the Krebs (citric acid) cycle, which is a common pathway for oxidation of fuel molecules, including carbohydrates, fatty acids, and amino acids. Can catalyze the decarboxylation of 2-oxoadipate in vitro, but at a much lower rate than 2-oxoglutarate. Mainly active in the mitochondrion. A fraction of the 2-oxoglutarate dehydrogenase complex also localizes in the nucleus and is required for lysine succinylation of histones: associates with KAT2A on chromatin and provides succinyl-CoA to histone succinyltransferase KAT2A. The chain is 2-oxoglutarate dehydrogenase complex component E1 from Pongo abelii (Sumatran orangutan).